A 225-amino-acid chain; its full sequence is 7-cyano-7-deazaguanine synthase (225 aa).

ATP is bound at residue 7–17; it reads LSGGMDSTTLL. The Zn(2+) site is built by Cys183, Cys191, Cys194, and Cys197.

The protein belongs to the QueC family. Homodimer. Zn(2+) is required as a cofactor.

It carries out the reaction 7-carboxy-7-deazaguanine + NH4(+) + ATP = 7-cyano-7-deazaguanine + ADP + phosphate + H2O + H(+). It participates in purine metabolism; 7-cyano-7-deazaguanine biosynthesis. In terms of biological role, catalyzes the ATP-dependent conversion of 7-carboxy-7-deazaguanine (CDG) to 7-cyano-7-deazaguanine (preQ(0)). This is 7-cyano-7-deazaguanine synthase from Caldicellulosiruptor saccharolyticus (strain ATCC 43494 / DSM 8903 / Tp8T 6331).